The following is a 41-amino-acid chain: U-theraphotoxin-Lk1a (41 aa).

Disulfide bonds link cysteine 1/cysteine 16, cysteine 8/cysteine 21, and cysteine 15/cysteine 36.

This sequence belongs to the neurotoxin 14 (magi-1) family. 08 (Ltx-4) subfamily. As to expression, expressed by the venom gland.

The protein localises to the secreted. In terms of biological role, toxin that causes irreversible contractile paralysis in adult Aedes aegypti resulting in 100% mortality after 24 hours. The sequence is that of U-theraphotoxin-Lk1a from Lasiodora klugi (Bahia scarlet tarantula).